A 225-amino-acid chain; its full sequence is UPF0173 metal-dependent hydrolase PYRAB05000 (225 aa).

The protein belongs to the UPF0173 family.

The sequence is that of UPF0173 metal-dependent hydrolase PYRAB05000 from Pyrococcus abyssi (strain GE5 / Orsay).